A 625-amino-acid polypeptide reads, in one-letter code: 1-deoxy-D-xylulose-5-phosphate synthase (625 aa).

Residues histidine 74 and 115–117 (GHS) contribute to the thiamine diphosphate site. Residue aspartate 146 coordinates Mg(2+). Thiamine diphosphate contacts are provided by residues 147–148 (GA), asparagine 175, tyrosine 286, and glutamate 367. Asparagine 175 is a binding site for Mg(2+).

The protein belongs to the transketolase family. DXPS subfamily. Homodimer. Requires Mg(2+) as cofactor. The cofactor is thiamine diphosphate.

It catalyses the reaction D-glyceraldehyde 3-phosphate + pyruvate + H(+) = 1-deoxy-D-xylulose 5-phosphate + CO2. It participates in metabolic intermediate biosynthesis; 1-deoxy-D-xylulose 5-phosphate biosynthesis; 1-deoxy-D-xylulose 5-phosphate from D-glyceraldehyde 3-phosphate and pyruvate: step 1/1. Functionally, catalyzes the acyloin condensation reaction between C atoms 2 and 3 of pyruvate and glyceraldehyde 3-phosphate to yield 1-deoxy-D-xylulose-5-phosphate (DXP). This chain is 1-deoxy-D-xylulose-5-phosphate synthase, found in Lachnoclostridium phytofermentans (strain ATCC 700394 / DSM 18823 / ISDg) (Clostridium phytofermentans).